The sequence spans 381 residues: Spindlin interactor and repressor of chromatin-binding protein (381 aa).

The segment at 42–73 (RVTQQEKTPPPRPSPLEAGSDGCEEPKQQVSW) is disordered. K48 is covalently cross-linked (Glycyl lysine isopeptide (Lys-Gly) (interchain with G-Cter in SUMO2)). A phosphoserine mark is found at S121 and S148. Disordered stretches follow at residues 144-264 (AEQP…EVRH), 283-320 (QLRG…LRGT), and 339-381 (LQDW…GNGV). Residues K189 and K220 each participate in a glycyl lysine isopeptide (Lys-Gly) (interchain with G-Cter in SUMO2) cross-link. Over residues 218–228 (RWKEPPGEEPV) the composition is skewed to basic and acidic residues. A phosphoserine mark is found at S248 and S251. Residues 287-299 (PDSKDSPKDREVA) are compositionally biased toward basic and acidic residues. Glycyl lysine isopeptide (Lys-Gly) (interchain with G-Cter in SUMO2) cross-links involve residues K290 and K294. S308 and S310 each carry phosphoserine. Residue K374 forms a Glycyl lysine isopeptide (Lys-Gly) (interchain with G-Cter in SUMO2) linkage.

As to quaternary structure, interacts with SPIN1, SPIN2A, SPIN2B, SPIN3 and SPIN4. Interacts with TCF7L2 in a SPIN1-dependent manner. Interacts with PARP1; promoting PARP1 ADP-ribosyltransferase activity.

The protein localises to the nucleus. It localises to the chromosome. In terms of biological role, chromatin protein that stabilizes SPIN1 and enhances its association with histone H3 trimethylated at both 'Lys-4' and 'Lys-9' (H3K4me3K9me3). Positively regulates poly-ADP-ribosylation in response to DNA damage; acts by facilitating PARP1 ADP-ribosyltransferase activity. The polypeptide is Spindlin interactor and repressor of chromatin-binding protein (Homo sapiens (Human)).